Here is a 546-residue protein sequence, read N- to C-terminus: Pyridine nucleotide-disulfide oxidoreductase domain-containing protein 1 (546 aa).

This sequence belongs to the class-I pyridine nucleotide-disulfide oxidoreductase family. PYROXD1 subfamily. It depends on FAD as a cofactor.

The chain is Pyridine nucleotide-disulfide oxidoreductase domain-containing protein 1 (pyroxd1) from Dictyostelium discoideum (Social amoeba).